We begin with the raw amino-acid sequence, 76 residues long: U-scoloptoxin(13)-Sm1a (76 aa).

The N-terminal stretch at 1–22 (MAYICAXTLAFLLCVNTGIIQA) is a signal peptide.

This sequence belongs to the scoloptoxin-13 family. In terms of processing, contains 4 disulfide bonds. Expressed by the venom gland.

It localises to the secreted. In Scolopendra morsitans (Tanzanian blue ringleg centipede), this protein is U-scoloptoxin(13)-Sm1a.